Here is a 140-residue protein sequence, read N- to C-terminus: uncharacterized protein (140 aa).

Residues 2–140 enclose the N-acetyltransferase domain; the sequence is KAVIAKNEEQ…GIPHLQMMKD (139 aa).

It belongs to the acetyltransferase family.

This is an uncharacterized protein from Bacillus subtilis (strain 168).